Consider the following 385-residue polypeptide: Tumor protein p53-inducible protein 13 (385 aa).

Residues 1 to 27 (MVHPPPPPPRLLLVALVGLLSLREVVA) form the signal peptide. Topologically, residues 28-301 (EPAEEAGTPC…ARGPTPRTEE (274 aa)) are extracellular. Positions 242-297 (APVSLTTGGPGGNGRSRTEAQMPSGQGNHGGCACPGQVSPAPRAAGPPRVARGPTP) are disordered. Residues 281–297 (PAPRAAGPPRVARGPTP) are compositionally biased toward low complexity. A helical membrane pass occupies residues 302–322 (AAWAAMALTFLLVLLTLATLC). Over 323–385 (TRLHRNFRRS…DSGPDSESSD (63 aa)) the chain is Cytoplasmic. The segment covering 359-369 (SRRIKRSRRRP) has biased composition (basic residues). A disordered region spans residues 359–385 (SRRIKRSRRRPLLPPTPDSGPDSESSD).

Its subcellular location is the cell membrane. The protein localises to the cytoplasm. In terms of biological role, may act as a tumor suppressor. Inhibits tumor cell growth, when overexpressed. The polypeptide is Tumor protein p53-inducible protein 13 (Tp53i13) (Mus musculus (Mouse)).